Reading from the N-terminus, the 150-residue chain is Large ribosomal subunit protein uL15 (150 aa).

Residues 18-43 are disordered; that stretch reads IVGRGSSSGWGKTSGKGHKGQQARSG.

Belongs to the universal ribosomal protein uL15 family. As to quaternary structure, part of the 50S ribosomal subunit.

Functionally, binds to the 23S rRNA. The protein is Large ribosomal subunit protein uL15 of Treponema denticola (strain ATCC 35405 / DSM 14222 / CIP 103919 / JCM 8153 / KCTC 15104).